A 780-amino-acid polypeptide reads, in one-letter code: Probable trehalase (780 aa).

The tract at residues 1 to 48 (MVDFLPKVTEINPPSEGNDGEDNIKPLSSGSEQRPLKEEGQQGGRRHH) is disordered. A phosphoserine mark is found at S52 and S53. Residue T88 is modified to Phosphothreonine. The residue at position 112 (S112) is a Phosphoserine. Substrate-binding positions include R331, 338–339 (WD), N375, R384, 384–386 (RSQ), and G505. Residues D507 and E703 each act as proton donor/acceptor in the active site.

The protein belongs to the glycosyl hydrolase 37 family.

The enzyme catalyses alpha,alpha-trehalose + H2O = alpha-D-glucose + beta-D-glucose. This Saccharomyces cerevisiae (strain ATCC 204508 / S288c) (Baker's yeast) protein is Probable trehalase (NTH2).